Reading from the N-terminus, the 255-residue chain is uncharacterized protein (255 aa).

Positions 6, 8, 92, 128, 153, and 203 each coordinate a divalent metal cation.

Belongs to the metallo-dependent hydrolases superfamily. TatD-type hydrolase family. A divalent metal cation serves as cofactor.

This is an uncharacterized protein from Bacillus subtilis (strain 168).